The sequence spans 129 residues: Fluoride-specific ion channel FluC (129 aa).

A run of 4 helical transmembrane segments spans residues 5-25, 32-52, 60-80, and 99-119; these read LTIA…SGWV, AFPF…GLIM, LIPA…LTTF, and AMVN…LGVI. Positions 75 and 78 each coordinate Na(+).

Belongs to the fluoride channel Fluc/FEX (TC 1.A.43) family.

The protein resides in the cell inner membrane. It catalyses the reaction fluoride(in) = fluoride(out). Na(+) is not transported, but it plays an essential structural role and its presence is essential for fluoride channel function. Functionally, fluoride-specific ion channel. Important for reducing fluoride concentration in the cell, thus reducing its toxicity. This chain is Fluoride-specific ion channel FluC, found in Pelobacter propionicus (strain DSM 2379 / NBRC 103807 / OttBd1).